The chain runs to 271 residues: 4-hydroxy-tetrahydrodipicolinate reductase (271 aa).

NAD(+) is bound by residues 11–16 (GAAGRM), E37, 102–104 (GTT), and 126–129 (AGNM). The active-site Proton donor/acceptor is the H159. H160 is a binding site for (S)-2,3,4,5-tetrahydrodipicolinate. K163 acts as the Proton donor in catalysis. 169 to 170 (GT) provides a ligand contact to (S)-2,3,4,5-tetrahydrodipicolinate.

This sequence belongs to the DapB family.

The protein localises to the cytoplasm. It catalyses the reaction (S)-2,3,4,5-tetrahydrodipicolinate + NAD(+) + H2O = (2S,4S)-4-hydroxy-2,3,4,5-tetrahydrodipicolinate + NADH + H(+). It carries out the reaction (S)-2,3,4,5-tetrahydrodipicolinate + NADP(+) + H2O = (2S,4S)-4-hydroxy-2,3,4,5-tetrahydrodipicolinate + NADPH + H(+). The protein operates within amino-acid biosynthesis; L-lysine biosynthesis via DAP pathway; (S)-tetrahydrodipicolinate from L-aspartate: step 4/4. Catalyzes the conversion of 4-hydroxy-tetrahydrodipicolinate (HTPA) to tetrahydrodipicolinate. This Parvibaculum lavamentivorans (strain DS-1 / DSM 13023 / NCIMB 13966) protein is 4-hydroxy-tetrahydrodipicolinate reductase.